Consider the following 681-residue polypeptide: MNDPGDIPLTHTSTPDSRPPCSIISIIPTIGMSSCRGRAEAFARSLSSKLRTLGSQTTEEGEGNAEDEPIINGTSTNTWVNSHDSEQTVTDLQPLRHESDSFFDFDCELESPGSPVDECEYLRLIETASNTPHNSTAESGYACASMASSHSSSNDGPYFDASASTSTAAAAQDQTLPASEHKEYVNTLQLNGKHGLANGVQEEQPAFQDDVQEDEAFLQAQILNELQKHSNSLTEVEQTKPEEGKLTNGHLEKVEELELKDVLEVAGTTNRAPKVIAAPQEVEAFADRSQEQSPNDRVQKESSQERVPEGTPFEGVQGESPSDRVQTDASDERVQEEISNDTVQVESNHKSATESISTEVTTLERSPEESRNDELSPDSGVDETDKSASNLTVDVDLAQIEQAKQDATEAVEKSGAPSRGTTVDTTDDEDDCRPQRIRRCSSLKTGKTPPGTPGRKKIVRFADVLGLDLADVKTFLDEIPTIPKSAFEDLEILESEPPLQLGPKSDKLLMPLFQQPGGLPKFLDAVREKQVSLENAAVTDNINQTISGSVRVRNLDFHKSVHIRYSLDGWRSYADLQANYVENSCDGFSDIFTFVLFGNSLHVGQRLEFAVRFQCKGQQFWDNNYGANYCFQCLPSSTHTAGGSTASPPSVATGAVSTGHSASLVGLLSPTAGDAWCSSFY.

Disordered stretches follow at residues 1–20, 53–94, 232–251, 285–391, and 405–435; these read MNDPGDIPLTHTSTPDSRPP, LGSQ…DLQP, SLTEVEQTKPEEGKLTNGHL, FADR…ASNL, and QDATEAVEKSGAPSRGTTVDTTDDEDDCRPQ. The span at 59 to 69 shows a compositional bias: acidic residues; sequence EEGEGNAEDEP. Polar residues predominate over residues 72–91; sequence NGTSTNTWVNSHDSEQTVTD. Basic and acidic residues-rich tracts occupy residues 237-251, 297-308, and 321-336; these read EQTKPEEGKLTNGHL, RVQKESSQERVP, and PSDRVQTDASDERVQE. Positions 353 to 364 are enriched in polar residues; the sequence is TESISTEVTTLE. A compositionally biased stretch (basic and acidic residues) spans 365–374; that stretch reads RSPEESRNDE. Residues 525 to 632 form the CBM21 domain; that stretch reads AVREKQVSLE…NNYGANYCFQ (108 aa). Thr-545 carries the post-translational modification Phosphothreonine. A phosphoserine mark is found at Ser-547 and Ser-549.

The sequence is that of Glycogen-binding subunit 76A (Gbs-76A) from Drosophila melanogaster (Fruit fly).